The chain runs to 206 residues: Large ribosomal subunit protein uL4 (206 aa).

The tract at residues 46-77 is disordered; sequence GTRAQKDREQVRHSTKKPFKQKGTGRARAGMT. A compositionally biased stretch (basic residues) spans 58-70; the sequence is HSTKKPFKQKGTG.

The protein belongs to the universal ribosomal protein uL4 family. Part of the 50S ribosomal subunit.

Its function is as follows. One of the primary rRNA binding proteins, this protein initially binds near the 5'-end of the 23S rRNA. It is important during the early stages of 50S assembly. It makes multiple contacts with different domains of the 23S rRNA in the assembled 50S subunit and ribosome. Functionally, forms part of the polypeptide exit tunnel. This is Large ribosomal subunit protein uL4 from Polaromonas sp. (strain JS666 / ATCC BAA-500).